The following is a 61-amino-acid chain: Small ribosomal subunit protein bS21 (61 aa).

The protein belongs to the bacterial ribosomal protein bS21 family.

This chain is Small ribosomal subunit protein bS21, found in Methylacidiphilum infernorum (isolate V4) (Methylokorus infernorum (strain V4)).